A 187-amino-acid polypeptide reads, in one-letter code: MKVSAVETGEISQVSAPRKGMIRGLSIMDFILRIVAAIGTLGSALSTGTTRETLPFTTQFVKFRAVFDDLPTFVFFVTSNSIVCGYLVLSLALSFFHIIRRSSAAKSRILLVFLDTVMFGLLTTGAAAAGTIVYVSHYGNVNANWFPFCGQYNHFCERISGSLIGSFIAVVIFMIIILMSAVSISKH.

The Cytoplasmic segment spans residues 1–24 (MKVSAVETGEISQVSAPRKGMIRG). The helical transmembrane segment at 25 to 45 (LSIMDFILRIVAAIGTLGSAL) threads the bilayer. The Extracellular portion of the chain corresponds to 46–72 (STGTTRETLPFTTQFVKFRAVFDDLPT). Residues 73–93 (FVFFVTSNSIVCGYLVLSLAL) form a helical membrane-spanning segment. Residues 94-108 (SFFHIIRRSSAAKSR) are Cytoplasmic-facing. A helical transmembrane segment spans residues 109 to 129 (ILLVFLDTVMFGLLTTGAAAA). Topologically, residues 130–163 (GTIVYVSHYGNVNANWFPFCGQYNHFCERISGSL) are extracellular. The chain crosses the membrane as a helical span at residues 164-184 (IGSFIAVVIFMIIILMSAVSI). Topologically, residues 185–187 (SKH) are cytoplasmic.

This sequence belongs to the Casparian strip membrane proteins (CASP) family. Homodimer and heterodimers.

The protein localises to the cell membrane. This is CASP-like protein 2 from Lotus japonicus (Lotus corniculatus var. japonicus).